The following is a 305-amino-acid chain: U6 small nuclear RNA (adenine-(43)-N(6))-methyltransferase (305 aa).

The S-adenosyl-L-methionine site is built by Arg-87, Gly-112, Glu-135, Thr-166, and Asn-188. Residues 197–221 (PNPLGGNTRNPERRPAPNNARTGSQ) form a disordered region.

The protein belongs to the methyltransferase superfamily. METTL16/RlmF family.

The catalysed reaction is adenosine in U6 snRNA + S-adenosyl-L-methionine = N(6)-methyladenosine in U6 snRNA + S-adenosyl-L-homocysteine + H(+). Its function is as follows. RNA N6-methyltransferase that mediates N6-methylation of adenine of U6 small nuclear RNA (U6 snRNA). In Drosophila melanogaster (Fruit fly), this protein is U6 small nuclear RNA (adenine-(43)-N(6))-methyltransferase.